We begin with the raw amino-acid sequence, 513 residues long: Noroxomaritidine synthase 2 (513 aa).

The helical transmembrane segment at 14–34 (HYPEILIAIACFLIFSLLLSA) threads the bilayer. Residue Cys458 participates in heme binding.

This sequence belongs to the cytochrome P450 family. It depends on heme as a cofactor.

The protein localises to the membrane. It carries out the reaction 4'-O-methylnorbelladine + reduced [NADPH--hemoprotein reductase] + O2 = (10bR,4aS)-noroxomaritidine + oxidized [NADPH--hemoprotein reductase] + 2 H2O + H(+). The catalysed reaction is 4'-O-methylnorbelladine + reduced [NADPH--hemoprotein reductase] + O2 = (10bS,4aR)-noroxomaritidine + oxidized [NADPH--hemoprotein reductase] + 2 H2O + H(+). It participates in alkaloid biosynthesis. In terms of biological role, cytochrome P450 that catalyzes an intramolecular para-para' C-C phenol coupling of 4'-O-methylnorbelladine in alkaloids biosynthesis, including haemanthamine- and crinamine-type alkaloids, promising anticancer agents. Catalyzes the formation of (10bR,4aS)-noroxomaritidine and (10bS,4aR)-noroxomaritidine from 4'-O-methylnorbelladine. This chain is Noroxomaritidine synthase 2, found in Narcissus aff. pseudonarcissus MK-2014 (Daffodil).